The chain runs to 461 residues: Spermidine/putrescine import ATP-binding protein PotA (461 aa).

One can recognise an ABC transporter domain in the interval 10 to 240; sequence IEVNGVSKFF…PINSFVADFI (231 aa). 42-49 is a binding site for ATP; it reads GPSGCGKT.

Belongs to the ABC transporter superfamily. Spermidine/putrescine importer (TC 3.A.1.11.1) family. As to quaternary structure, the complex is composed of two ATP-binding proteins (PotA), two transmembrane proteins (PotB and PotC) and a solute-binding protein (PotD).

It localises to the cell inner membrane. It catalyses the reaction ATP + H2O + polyamine-[polyamine-binding protein]Side 1 = ADP + phosphate + polyamineSide 2 + [polyamine-binding protein]Side 1.. Its function is as follows. Part of the ABC transporter complex PotABCD involved in spermidine/putrescine import. Responsible for energy coupling to the transport system. This is Spermidine/putrescine import ATP-binding protein PotA from Bacteroides fragilis (strain YCH46).